The chain runs to 360 residues: Phosphoserine aminotransferase (360 aa).

Residue arginine 41 coordinates L-glutamate. The pyridoxal 5'-phosphate site is built by tryptophan 101, threonine 152, aspartate 172, and glutamine 195. Lysine 196 carries the post-translational modification N6-(pyridoxal phosphate)lysine. A pyridoxal 5'-phosphate-binding site is contributed by 237–238 (NT).

This sequence belongs to the class-V pyridoxal-phosphate-dependent aminotransferase family. SerC subfamily. Homodimer. Pyridoxal 5'-phosphate is required as a cofactor.

The protein resides in the cytoplasm. The enzyme catalyses O-phospho-L-serine + 2-oxoglutarate = 3-phosphooxypyruvate + L-glutamate. The catalysed reaction is 4-(phosphooxy)-L-threonine + 2-oxoglutarate = (R)-3-hydroxy-2-oxo-4-phosphooxybutanoate + L-glutamate. Its pathway is amino-acid biosynthesis; L-serine biosynthesis; L-serine from 3-phospho-D-glycerate: step 2/3. The protein operates within cofactor biosynthesis; pyridoxine 5'-phosphate biosynthesis; pyridoxine 5'-phosphate from D-erythrose 4-phosphate: step 3/5. Its function is as follows. Catalyzes the reversible conversion of 3-phosphohydroxypyruvate to phosphoserine and of 3-hydroxy-2-oxo-4-phosphonooxybutanoate to phosphohydroxythreonine. The protein is Phosphoserine aminotransferase of Burkholderia ambifaria (strain ATCC BAA-244 / DSM 16087 / CCUG 44356 / LMG 19182 / AMMD) (Burkholderia cepacia (strain AMMD)).